The sequence spans 116 residues: MRVKRGFKARRRRKKVLKLAKGFRGGHSKLYRTAADTVDRALMYAYRDRRQKKRDFRALWIARINAGARMNGLSYSKFIYGLKQADVALDRKVLAELAISDPACFAEITSLAAKQA.

This sequence belongs to the bacterial ribosomal protein bL20 family.

Binds directly to 23S ribosomal RNA and is necessary for the in vitro assembly process of the 50S ribosomal subunit. It is not involved in the protein synthesizing functions of that subunit. The protein is Large ribosomal subunit protein bL20 of Desulfatibacillum aliphaticivorans.